The chain runs to 1338 residues: MDLEPWGPLYRKQDQDGSLDNIAVVSGDIPSPHPKNEPSQTSTLHIPRDSDLDSDIPSVPTALIIAWGLTLSSLTGDEVVGFDLLPFRGDYQDLGARPYHFLLKFGYREWSREAATTGMDLGSASSEGLPQGMGNRPQIAPSRFRNVLIIKQCSDAPGDSGSLESPSLGNVDKDEPTDAFRADMFISIQCGIGRTGIDVHCSFDPAFWTSENIRMILLDLSRNFKEVMRCGRDDTPLTCLEGMSPKGLDCVLRRNIIPPPPKMEACVHHRFQARCRQNPSALAIDAWDGQLTYAELDSLSSQLASRLVSSITICPRGFMGVLMEKSAWVPVAILAVLKVGSAFVFLDGSQPLQRLKIICAETKSQLVLSSAHYREKANTLGPPVLLVEKNQSGLGQAKENDSCPSLLEDYPQPQSQPQDTLYAVFTSGSTGEPKGAMVDHGAFCTMCGPQMAARPTTNVSPRVFQFAPHAFTVSILDYLGTLLQGGCVCVPSEEELRNNMAGAIEGLSANIVTMTPSMARVLDPTQTPSLQLVLLAGEMMAQCDLDKWSQCVRLLSLYGQSENAAGSMISEKSIVPRAPNTFETLTPGFQCWIVSQDNPHRLMALGEVGELLLEGPALGQGYMNDPIQTEDKFICRSFCLEYAHSGSPQSYRLFKTGDLVRYTPAGEIELLGRKGAEVKLRGQRIDLTEIEHHLRCLFPSATRVVADVIIPSDDIDGLHPVLAAFVQVDSVSRTGQSAEATFASPRPEFRAEAKAVLSGLCQTIPSYMIPMTIIPTEAFPFTATGKLDRRSLRQYASAMSRSDLLKYVTDDRGPVVTAVTPVEIIIHDACVEALGVSSDKVGMLDSFPDLGGDSLAARRMVSICRTKGLELAVADILAHSSLTSLAEKCSAGGGGAKQISQGVEMLDPFSTAKEEFLSHLPSFLPNADMIADVFPVQGAQRRAARAIDTFIFRLSGPVDADRLRDACQVLQQAHLALRSIFVPFYGKFMQVVLRVPPLDFTRRLLPDGTDLVKWAESIGQADKTQRPPSEEFVVRFTLAETAGTPDYSIFMMRLSHAQYDAGCLARIISDLWAVYEQKQLVVKSDFAQYARRAVQQTHLLSMEAFWRDLLAGTTGLTPLPVTGISAEEERTIIVQQRVELKEPPPTGISMATVVRGAWSWVLHQQTGNTVVVFNEMLNGRDVVPLEDTEPVVGACHSIVPVCVHFPLPQSGRTPRELLSALQEQHLASLTFTTLDRDYLIQNCTEWTSHQSGFILAYQNFPEICDLVIGEDLSCQWASQVLDLAEPGEAWVTATPLPGALQISLRVSTAAMDEQEANAWISALGQTIIRFLDSPDSVL.

The interval 22 to 52 (IAVVSGDIPSPHPKNEPSQTSTLHIPRDSDL) is disordered. The segment at 271–681 (FQARCRQNPS…GRKGAEVKLR (411 aa)) is adenylation. The region spanning 820-893 (TPVEIIIHDA…SLAEKCSAGG (74 aa)) is the Carrier domain. Serine 854 is modified (O-(pantetheine 4'-phosphoryl)serine). Residues 949-1336 (TFIFRLSGPV…IIRFLDSPDS (388 aa)) form a condensation region.

It belongs to the NRP synthetase family.

The enzyme catalyses 7beta,14,16-trihydroxyconfertifolin + benzoate + H(+) = dideacetyl astellolide A + H2O. It carries out the reaction 7beta,14,16-trihydroxyconfertifolin + 4-hydroxybenzoate + H(+) = dideacetyl astellolide B + H2O. It participates in secondary metabolite biosynthesis; terpenoid biosynthesis. Nonribosomal peptide synthetase; part of the gene cluster that mediates the biosynthesis of astellolides, drimane-type sesquiterpene esters that show antimicrobial, anti-inflammatory, and anti-tumor activities. The first step in astellolide biosynthesis is performed by the sesquiterpene cyclase astC that catalyzes the formation of drimanyl pyrophosphate from farnesyl pyrophosphate. Drimanyl pyrophosphate is then dephosphorylated by the sesquiterpene phosphatase astI to produce drimanyl monophosphate which is further dephosphorylated to drim-8-ene-11-ol by atsK. Drim-8-ene-11-ol is converted to confertifolin, probably by the cytochrome P450 monooxygenase astD and/or the dehydrogenase astE. The cytochrome P450 monooxygenases astB, astF and astJ then hydroxylate confertifolin at C6, C14, or C15 to form trihydroxy confertifolin. The nonribosomal peptide synthetase astA catalyzes ester bond formation between trihydroxy contifolin and benzoic acid (BA) or 4-hydroxy benzoic acid (4HBA), leading to the formation of dideacetyl astellolides A and B, respectively. Finally, the O-acetyltransferase astG converts dideacetyl astellolides A and B into deacetyl astellolides A and B. The protein is Nonribosomal peptide synthetase astA of Aspergillus oryzae (strain ATCC 42149 / RIB 40) (Yellow koji mold).